We begin with the raw amino-acid sequence, 162 residues long: Probable chemoreceptor glutamine deamidase CheD (162 aa).

The protein belongs to the CheD family.

It catalyses the reaction L-glutaminyl-[protein] + H2O = L-glutamyl-[protein] + NH4(+). In terms of biological role, probably deamidates glutamine residues to glutamate on methyl-accepting chemotaxis receptors (MCPs), playing an important role in chemotaxis. This Syntrophotalea carbinolica (strain DSM 2380 / NBRC 103641 / GraBd1) (Pelobacter carbinolicus) protein is Probable chemoreceptor glutamine deamidase CheD.